Consider the following 787-residue polypeptide: Filamentous growth regulator 27 (787 aa).

The tract at residues methionine 1–aspartate 22 is disordered. Residues cysteine 31–cysteine 57 constitute a DNA-binding region (zn(2)-C6 fungal-type). Residues glycine 69 to serine 97 are a coiled coil. 2 disordered regions span residues serine 120–proline 140 and arginine 200–isoleucine 221. A compositionally biased stretch (polar residues) spans aspartate 209–isoleucine 221.

The protein resides in the nucleus. Its function is as follows. Transcription factor involved in yeast cell adherence to silicone substrate, filamentous growth, and biofilm formation. This Candida albicans (strain SC5314 / ATCC MYA-2876) (Yeast) protein is Filamentous growth regulator 27 (FGR27).